The sequence spans 248 residues: Trypsin I-P38 (248 aa).

A signal peptide spans 1–15; it reads MKFLVLVAFLGVAVA. A propeptide spans 16-25 (activation peptide); that stretch reads FPISDEDDDK. In terms of domain architecture, Peptidase S1 spans 26–246; sequence IVGGYSCARS…YVSWIKTTMS (221 aa). 6 disulfides stabilise this stretch: C32-C162, C50-C66, C134-C235, C141-C208, C173-C187, and C198-C222. H65 functions as the Charge relay system in the catalytic mechanism. 3 residues coordinate Ca(2+): E77, N79, and E87. D109 (charge relay system) is an active-site residue. Catalysis depends on S202, which acts as the Charge relay system.

It belongs to the peptidase S1 family. It depends on Ca(2+) as a cofactor. High levels are seen in the pancreas while lower levels are found in the liver, spleen and thymus.

It is found in the secreted. The protein resides in the extracellular space. The enzyme catalyses Preferential cleavage: Arg-|-Xaa, Lys-|-Xaa.. The sequence is that of Trypsin I-P38 from Gallus gallus (Chicken).